Here is a 308-residue protein sequence, read N- to C-terminus: Staphylococcal superantigen-like 4 (308 aa).

A signal peptide spans 1 to 30 (MKITTIAKTSLALGLLTTGVITTTTQAANA). The disordered stretch occupies residues 28 to 117 (ANATTPSSTK…TTKQVPTEIN (90 aa)). 2 stretches are compositionally biased toward polar residues: residues 33–47 (PSST…TPPS) and 55–76 (SKPN…TANA). A compositionally biased stretch (low complexity) spans 77 to 93 (TTPPSTKVTTPPSTNTP). Residues 94-114 (QPMQSTKSDTPQSPTTKQVPT) show a composition bias toward polar residues. Positions 180–278 (VDVFVVLEEN…VIKMKNGGKY (99 aa)) are sialyl Lewis X-binding.

This sequence belongs to the staphylococcal/streptococcal toxin family.

The protein localises to the secreted. Functionally, secreted protein that plays a role in immune innate response inhibition by interfering with host TLR2-mediated pathway. The sequence is that of Staphylococcal superantigen-like 4 from Staphylococcus aureus (strain Newman).